A 471-amino-acid polypeptide reads, in one-letter code: Casein kinase 1-like protein 9 (471 aa).

Residues 9–278 form the Protein kinase domain; sequence FKLGRKIGSG…LKRLFRDLFI (270 aa). ATP contacts are provided by residues 15–23 and Lys-38; that span reads IGSGSFGEL. Residue Asp-128 is the Proton acceptor of the active site. Residues 300 to 471 are disordered; that stretch reads SSSGSSSRTR…RSLELLTLRK (172 aa). The span at 325-339 shows a compositional bias: basic and acidic residues; it reads EKQERIAGKETRENR. A compositionally biased stretch (low complexity) spans 385–430; sequence SSRYGSSSRRAIPSSSRPSSAGGPSDSRSSSRLVTSTGGVGTVSNR. Positions 431–449 are enriched in polar residues; that stretch reads ASTSQRIQAGNESRTSSFS. The segment covering 454 to 464 has biased composition (basic and acidic residues); the sequence is NTREDPLRRSL.

It belongs to the protein kinase superfamily. CK1 Ser/Thr protein kinase family. Casein kinase I subfamily. As to quaternary structure, monomer. In terms of processing, autophosphorylated on serine, threonine and tyrosine residues. Expressed in leaves, stems and flowers.

It localises to the cytoplasm. Its subcellular location is the nucleus. The catalysed reaction is L-seryl-[protein] + ATP = O-phospho-L-seryl-[protein] + ADP + H(+). It carries out the reaction L-threonyl-[protein] + ATP = O-phospho-L-threonyl-[protein] + ADP + H(+). Its function is as follows. Casein kinases are operationally defined by their preferential utilization of acidic proteins such as caseins as substrates. Can phosphorylate casein on serine and threonine residues, and poly(Glu,Tyr) in vitro. The sequence is that of Casein kinase 1-like protein 9 from Arabidopsis thaliana (Mouse-ear cress).